The primary structure comprises 786 residues: Rho GTPase-activating protein 10 (786 aa).

In terms of domain architecture, BAR spans 7 to 262 (EFSDCYLDSP…IRQNPKDHKR (256 aa)). The region spanning 265–372 (QFTAEGYLYV…WLEALGGKEA (108 aa)) is the PH domain. Residues 389 to 574 (AQLDKMGFTI…ILIENHEKIF (186 aa)) enclose the Rho-GAP domain. Disordered regions lie at residues 576–608 (TPPDTTFPEPTCLSASPPNAPPRQSKRQGQRTK) and 621–727 (EDGD…PPES). Positions 599-608 (QSKRQGQRTK) are enriched in basic residues. Low complexity predominate over residues 634–651 (PTSSLDSLSSPSPVTTAV). Polar residues predominate over residues 676–688 (IPGQTRSSMVQWL). Residues 689–712 (NPQSPTTTSSNSAVTPLSPGSSPF) are compositionally biased toward low complexity. Residues 728–786 (IRSRKARAVYPCEAEHSSELSFEIGAIFEDVQTSREPGWLEGTLNGKRGLIPQNYVKLL) form the SH3 domain.

As to quaternary structure, interacts with PKN3. Interacts with caspase-activated PAK2 proteolytic fragment PAK-2p34; the interaction does not affect GRAF2/ARHGAP10 GTPase activation activity towards RHOA and CDC42. Interacts via its SH3 domain with PTK2/FAK1. Interacts with PTK2B/PYK2; the interaction negatively regulates GRAF2/ARHGAP10 GTPase-activating activity. Interacts with MICAL1 and WDR44; complex formation might transit from GRAF2/ARHGAP10-MICAL1 to GRAF2/ARHGAP10-WDR44 complexes. Post-translationally, phosphorylated. Phosphorylated in vitro by constitutive active PKN3. High levels of expression in heart and skeletal muscle.

It localises to the cytoplasm. The protein resides in the perinuclear region. It is found in the cell membrane. Its subcellular location is the endosome membrane. GTPase-activating protein that catalyzes the conversion of active GTP-bound Rho GTPases to their inactive GDP-bound form, thus suppressing various Rho GTPase-mediated cellular processes. Also converts Cdc42 to an inactive GDP-bound state. Essential for PTKB2 regulation of cytoskeletal organization via Rho family GTPases. Inhibits PAK2 proteolytic fragment PAK-2p34 kinase activity and changes its localization from the nucleus to the perinuclear region. Stabilizes PAK-2p34 thereby increasing stimulation of cell death. Associates with MICAL1 on the endosomal membrane to promote Rab8-Rab10-dependent tubule extension. After dissociation with MICAL1, recruits WDR44 which connects the endoplasmic reticulum (ER) with the endosomal tubule, thereby participating in the export of a subset of neosynthesized proteins. The sequence is that of Rho GTPase-activating protein 10 (ARHGAP10) from Homo sapiens (Human).